Here is a 703-residue protein sequence, read N- to C-terminus: DNA ligase (703 aa).

The interval 1–20 (MNDNLDLFSGAAPAAPESGA) is disordered. Residues 9–20 (SGAAPAAPESGA) are compositionally biased toward low complexity. Residues 53 to 57 (DGEYD), 102 to 103 (SI), and Glu-139 each bind NAD(+). Residue Lys-141 is the N6-AMP-lysine intermediate of the active site. NAD(+)-binding residues include Arg-162, Glu-200, Lys-321, and Lys-345. Cys-439, Cys-442, Cys-457, and Cys-463 together coordinate Zn(2+). One can recognise a BRCT domain in the interval 622–703 (QTAQPLAGMT…MLALLAGGDR (82 aa)).

It belongs to the NAD-dependent DNA ligase family. LigA subfamily. Requires Mg(2+) as cofactor. The cofactor is Mn(2+).

The catalysed reaction is NAD(+) + (deoxyribonucleotide)n-3'-hydroxyl + 5'-phospho-(deoxyribonucleotide)m = (deoxyribonucleotide)n+m + AMP + beta-nicotinamide D-nucleotide.. Functionally, DNA ligase that catalyzes the formation of phosphodiester linkages between 5'-phosphoryl and 3'-hydroxyl groups in double-stranded DNA using NAD as a coenzyme and as the energy source for the reaction. It is essential for DNA replication and repair of damaged DNA. This chain is DNA ligase, found in Delftia acidovorans (strain DSM 14801 / SPH-1).